Reading from the N-terminus, the 1169-residue chain is Protein qua-1 (1169 aa).

The N-terminal stretch at 1 to 22 is a signal peptide; it reads MRRLSAILPILLLSNFWPTVES. Disordered stretches follow at residues 261–338 and 368–933; these read GATG…AGTN and AGGV…RTSS. Residues 278–292 show a composition bias toward low complexity; it reads ESNGNNNNSFEGGRS. The segment covering 312–337 has biased composition (gly residues); sequence GAGGKGGAGADGAAGSGAGAGAGAGT. Acidic residues-rich tracts occupy residues 426–437 and 453–464; these read DEEDEEDNGDED and DDGDGDEDDDGT. Basic and acidic residues predominate over residues 511-523; that stretch reads SPDDNDLLEKDEN. Composition is skewed to gly residues over residues 526–536, 545–572, 605–634, 656–700, and 727–752; these read NGKGGAGNGNG, KGNGTGDGDGDGNGNGNGLTGDGNGTGD, DGNGNGTGDGNGDGNDNGNGSKGLGTGSGD, GSNG…GGTG, and NAEGNGKGNGNDGKGSGSGDGSGAGG. Over residues 753 to 774 the composition is skewed to basic and acidic residues; the sequence is KGDKSDSESGNEADGKDGKKNE. The span at 775 to 791 shows a compositional bias: gly residues; the sequence is GAGGEAAAGSGGANKGG. Residues 793 to 803 show a composition bias toward acidic residues; sequence DGDDDDVDVTD. Positions 840–855 are enriched in polar residues; sequence GTVQTGAKHNAESSAS. Low complexity predominate over residues 889–906; the sequence is SGTSESVTNGSGATESGS. The segment covering 907 to 923 has biased composition (gly residues); that stretch reads TGSGTTGTGTSGTGSSG. Low complexity predominate over residues 924–933; that stretch reads TGASAARTSS.

In terms of tissue distribution, transiently expressed in head cells.

It localises to the cytoplasmic vesicle. The protein resides in the secreted. It is found in the extracellular space. The protein localises to the extracellular matrix. Required for cuticle shedding and normal alae morphology and localization, and subsequently larval development. The protein is Protein qua-1 of Caenorhabditis elegans.